The sequence spans 167 residues: NADH-quinone oxidoreductase subunit I 1 (167 aa).

2 4Fe-4S ferredoxin-type domains span residues 58–88 (LRRY…IDAE) and 98–127 (TRYD…EGPN). The [4Fe-4S] cluster site is built by C68, C71, C74, C78, C107, C110, C113, and C117.

Belongs to the complex I 23 kDa subunit family. In terms of assembly, NDH-1 is composed of 14 different subunits. Subunits NuoA, H, J, K, L, M, N constitute the membrane sector of the complex. [4Fe-4S] cluster is required as a cofactor.

It is found in the cell inner membrane. It carries out the reaction a quinone + NADH + 5 H(+)(in) = a quinol + NAD(+) + 4 H(+)(out). In terms of biological role, NDH-1 shuttles electrons from NADH, via FMN and iron-sulfur (Fe-S) centers, to quinones in the respiratory chain. The immediate electron acceptor for the enzyme in this species is believed to be ubiquinone. Couples the redox reaction to proton translocation (for every two electrons transferred, four hydrogen ions are translocated across the cytoplasmic membrane), and thus conserves the redox energy in a proton gradient. The sequence is that of NADH-quinone oxidoreductase subunit I 1 from Cereibacter sphaeroides (strain ATCC 17029 / ATH 2.4.9) (Rhodobacter sphaeroides).